A 584-amino-acid polypeptide reads, in one-letter code: Protein DENND6A (584 aa).

Residues 1-23 (MALWERGAGGAAEAGEDATEEPE) form a disordered region. Residues 39–218 (HCVCVVGFDL…KLRIPTYRDK (180 aa)) form the uDENN domain. Positions 244–369 (EVDLFRCFCP…VKVKKLKNLK (126 aa)) constitute a cDENN domain. Residues 371 to 504 (LDSKPGVYTS…RSRQKEMTQN (134 aa)) enclose the dDENN domain.

It belongs to the DENND6 family.

It localises to the recycling endosome. The protein localises to the cytoplasm. Functionally, guanine nucleotide exchange factor (GEF) for RAB14. The sequence is that of Protein DENND6A (DENND6A) from Gallus gallus (Chicken).